Here is a 384-residue protein sequence, read N- to C-terminus: UDP-N-acetylglucosamine--N-acetylmuramyl-(pentapeptide) pyrophosphoryl-undecaprenol N-acetylglucosamine transferase (384 aa).

Residues 17–19 (TGG), asparagine 131, arginine 172, serine 200, and glutamine 301 contribute to the UDP-N-acetyl-alpha-D-glucosamine site.

Belongs to the glycosyltransferase 28 family. MurG subfamily.

Its subcellular location is the cell inner membrane. The enzyme catalyses di-trans,octa-cis-undecaprenyl diphospho-N-acetyl-alpha-D-muramoyl-L-alanyl-D-glutamyl-meso-2,6-diaminopimeloyl-D-alanyl-D-alanine + UDP-N-acetyl-alpha-D-glucosamine = di-trans,octa-cis-undecaprenyl diphospho-[N-acetyl-alpha-D-glucosaminyl-(1-&gt;4)]-N-acetyl-alpha-D-muramoyl-L-alanyl-D-glutamyl-meso-2,6-diaminopimeloyl-D-alanyl-D-alanine + UDP + H(+). It participates in cell wall biogenesis; peptidoglycan biosynthesis. Cell wall formation. Catalyzes the transfer of a GlcNAc subunit on undecaprenyl-pyrophosphoryl-MurNAc-pentapeptide (lipid intermediate I) to form undecaprenyl-pyrophosphoryl-MurNAc-(pentapeptide)GlcNAc (lipid intermediate II). This is UDP-N-acetylglucosamine--N-acetylmuramyl-(pentapeptide) pyrophosphoryl-undecaprenol N-acetylglucosamine transferase from Granulibacter bethesdensis (strain ATCC BAA-1260 / CGDNIH1).